Consider the following 455-residue polypeptide: mRNA cleavage and polyadenylation factor CLP1 (455 aa).

ATP-binding residues include Glu28 and Lys67. The tract at residues 112 to 131 is disordered; the sequence is EAAARNNGGGRSAPHGPRVL. 137–142 contributes to the ATP binding site; the sequence is GCGRTS.

This sequence belongs to the Clp1 family. Clp1 subfamily. In terms of assembly, component of a pre-mRNA cleavage factor complex. Interacts directly with PCF11.

The protein resides in the nucleus. Required for endonucleolytic cleavage during polyadenylation-dependent pre-mRNA 3'-end formation. The polypeptide is mRNA cleavage and polyadenylation factor CLP1 (Pyricularia oryzae (strain 70-15 / ATCC MYA-4617 / FGSC 8958) (Rice blast fungus)).